We begin with the raw amino-acid sequence, 607 residues long: Elongation factor 4 (607 aa).

The tr-type G domain occupies 11-193 (SKIRNFSIIA…QIVEKVPAPT (183 aa)). GTP is bound by residues 23–28 (DHGKST) and 140–143 (NKID).

The protein belongs to the TRAFAC class translation factor GTPase superfamily. Classic translation factor GTPase family. LepA subfamily.

It localises to the cell membrane. It carries out the reaction GTP + H2O = GDP + phosphate + H(+). Its function is as follows. Required for accurate and efficient protein synthesis under certain stress conditions. May act as a fidelity factor of the translation reaction, by catalyzing a one-codon backward translocation of tRNAs on improperly translocated ribosomes. Back-translocation proceeds from a post-translocation (POST) complex to a pre-translocation (PRE) complex, thus giving elongation factor G a second chance to translocate the tRNAs correctly. Binds to ribosomes in a GTP-dependent manner. The protein is Elongation factor 4 of Bacillus cereus (strain ZK / E33L).